Consider the following 686-residue polypeptide: Antigen peptide transporter 2 (686 aa).

Residues 1-6 lie on the Lumenal side of the membrane; sequence MRLPDL. Residues 7–27 traverse the membrane as a helical segment; that stretch reads RPWTSLLLVDAALLWLLQGPL. Topologically, residues 28-56 are cytoplasmic; the sequence is GTLLPQGLPGLWLEGTLRLGGLWGLLKLR. Residues 57–77 form a helical membrane-spanning segment; the sequence is GLLGFVGTLLLPLCLATPLTV. The Lumenal segment spans residues 78–98; it reads SLRALVAGASRAPPARVASAP. A helical transmembrane segment spans residues 99-119; the sequence is WSWLLVGYGAAGLSWSLWAVL. Topologically, residues 120 to 148 are cytoplasmic; it reads SPPGAQEKEQDQVNNKVLMWRLLKLSRPD. A helical transmembrane segment spans residues 149–169; that stretch reads LPLLVAAFFFLVLAVLGETLI. In terms of domain architecture, ABC transmembrane type-1 spans 152–435; that stretch reads LVAAFFFLVL…LVYIYGDMLS (284 aa). The Lumenal segment spans residues 170-187; it reads PHYSGRVIDILGGDFDPH. The chain crosses the membrane as a helical span at residues 188–208; the sequence is AFASAIFFMCLFSFGSSLSAG. Over 209-266 the chain is Cytoplasmic; it reads CRGGCFTYTMSRINLRIREQLFSSLLRQDLGFFQETKTGELNSRLSSDTTLMSNWLPL. The helical transmembrane segment at 267–287 threads the bilayer; sequence NANVLLRSLVKVVGLYGFMLS. Over 288 to 293 the chain is Lumenal; it reads ISPRLT. A helical transmembrane segment spans residues 294-314; the sequence is LLSLLHMPFTIAAEKVYNTRH. A part of the peptide-binding site region spans residues 301 to 389; the sequence is PFTIAAEKVY…RRVLHLGVQM (89 aa). Residues 315–374 lie on the Cytoplasmic side of the membrane; the sequence is QEVLREIQDAVARAGQVVREAVGGLQTVRSFGAEEHEVCRYKEALEQCRQLYWRRDLERA. Residues 375–395 traverse the membrane as a helical segment; sequence LYLLVRRVLHLGVQMLMLSCG. Residues 396–408 are Lumenal-facing; the sequence is LQQMQDGELTQGS. A helical membrane pass occupies residues 409–429; it reads LLSFMIYQESVGSYVQTLVYI. A part of the peptide-binding site region spans residues 414-433; it reads IYQESVGSYVQTLVYIYGDM. The Cytoplasmic segment spans residues 430-686; it reads YGDMLSNVGA…EGKLQKLAQL (257 aa). Residues 468–686 form the ABC transporter domain; the sequence is VKFQDVSFAY…EGKLQKLAQL (219 aa). Residue 503-510 participates in ATP binding; that stretch reads GPNGSGKS.

This sequence belongs to the ABC transporter superfamily. ABCB family. MHC peptide exporter (TC 3.A.1.209) subfamily. Heterodimer of TAP1 and TAP2 (TAP1-TAP2). A component of the peptide loading complex (PLC), interacts via TAPBP with MHCI heterodimer; this interaction mediates peptide-MHCI assembly. Recruits TAPBP in a 1:1 stoichiometry. Interacts with classical MHCI such as HLA-A*02-B2M; this interaction is obligatory for the loading of peptide epitopes. Interacts with non-classical MHCI molecules including HLA-E-B2M and HLA-F-B2M as well as PLC component CALR before the peptide loading. As to quaternary structure, (Microbial infection) Interacts with Epstein-Barr virus BLNF2a. In terms of assembly, (Microbial infection) Interacts with herpes simplex virus US12/ICP47. (Microbial infection) Interacts with adenovirus E3-19K glycoprotein, which binds TAP1-TAP2 and acts as a TAPBP inhibitor, preventing TAP1-TAP2 association with MHCI. Mg(2+) serves as cofactor.

It is found in the endoplasmic reticulum membrane. It catalyses the reaction a peptide antigen(in) + ATP + H2O = a peptide antigen(out) + ADP + phosphate + H(+). Inhibited at high ER lumenal peptide concentrations. Its activity is regulated as follows. (Microbial infection) Inhibited by herpes simplex virus US12/ICP47 protein, which blocks the peptide-binding site of TAP1-TAP2. With respect to regulation, (Microbial infection) Inhibited by human cytomegalovirus US6 glycoprotein, which binds to the lumenal side of TAP1-TAP2 complex and inhibits peptide translocation by specifically blocking ATP-binding and preventing TAP1-TAP2 conformational rearrangement induced by peptide binding. In terms of biological role, ABC transporter associated with antigen processing. In complex with TAP1 mediates unidirectional translocation of peptide antigens from cytosol to endoplasmic reticulum (ER) for loading onto MHC class I (MHCI) molecules. Uses the chemical energy of ATP to export peptides against the concentration gradient. During the transport cycle alternates between 'inward-facing' state with peptide binding site facing the cytosol to 'outward-facing' state with peptide binding site facing the ER lumen. Peptide antigen binding to ATP-loaded TAP1-TAP2 induces a switch to hydrolysis-competent 'outward-facing' conformation ready for peptide loading onto nascent MHCI molecules. Subsequently ATP hydrolysis resets the transporter to the 'inward facing' state for a new cycle. Typically transports intracellular peptide antigens of 8 to 13 amino acids that arise from cytosolic proteolysis via IFNG-induced immunoproteasome. Binds peptides with free N- and C-termini, the first three and the C-terminal residues being critical. Preferentially selects peptides having a highly hydrophobic residue at position 3 and hydrophobic or charged residues at the C-terminal anchor. Proline at position 2 has the most destabilizing effect. As a component of the peptide loading complex (PLC), acts as a molecular scaffold essential for peptide-MHCI assembly and antigen presentation. The polypeptide is Antigen peptide transporter 2 (Homo sapiens (Human)).